We begin with the raw amino-acid sequence, 426 residues long: Phosphoribosylamine--glycine ligase (426 aa).

An ATP-grasp domain is found at lysine 113–threonine 320. An ATP-binding site is contributed by leucine 139 to serine 200. Mg(2+)-binding residues include glutamate 290 and asparagine 292.

The protein belongs to the GARS family. Mg(2+) serves as cofactor. It depends on Mn(2+) as a cofactor.

The catalysed reaction is 5-phospho-beta-D-ribosylamine + glycine + ATP = N(1)-(5-phospho-beta-D-ribosyl)glycinamide + ADP + phosphate + H(+). The protein operates within purine metabolism; IMP biosynthesis via de novo pathway; N(1)-(5-phospho-D-ribosyl)glycinamide from 5-phospho-alpha-D-ribose 1-diphosphate: step 2/2. The chain is Phosphoribosylamine--glycine ligase from Leptospira interrogans serogroup Icterohaemorrhagiae serovar copenhageni (strain Fiocruz L1-130).